Consider the following 154-residue polypeptide: 3-hydroxyacyl-[acyl-carrier-protein] dehydratase FabZ (154 aa).

The active site involves histidine 54.

This sequence belongs to the thioester dehydratase family. FabZ subfamily.

Its subcellular location is the cytoplasm. The enzyme catalyses a (3R)-hydroxyacyl-[ACP] = a (2E)-enoyl-[ACP] + H2O. Its function is as follows. Involved in unsaturated fatty acids biosynthesis. Catalyzes the dehydration of short chain beta-hydroxyacyl-ACPs and long chain saturated and unsaturated beta-hydroxyacyl-ACPs. The sequence is that of 3-hydroxyacyl-[acyl-carrier-protein] dehydratase FabZ from Chlamydia caviae (strain ATCC VR-813 / DSM 19441 / 03DC25 / GPIC) (Chlamydophila caviae).